A 320-amino-acid polypeptide reads, in one-letter code: Cytochrome f (320 aa).

The N-terminal stretch at 1–35 (MQTRNTFSSIKEEITRSISVSLMIYIITWAPVSNA) is a signal peptide. Heme-binding residues include Tyr-36, Cys-56, Cys-59, and His-60. A helical membrane pass occupies residues 286-306 (VQGLLFFFASVILAQIFLVLK).

Belongs to the cytochrome f family. In terms of assembly, the 4 large subunits of the cytochrome b6-f complex are cytochrome b6, subunit IV (17 kDa polypeptide, petD), cytochrome f and the Rieske protein, while the 4 small subunits are PetG, PetL, PetM and PetN. The complex functions as a dimer. Requires heme as cofactor.

The protein resides in the plastid. It is found in the chloroplast thylakoid membrane. Its function is as follows. Component of the cytochrome b6-f complex, which mediates electron transfer between photosystem II (PSII) and photosystem I (PSI), cyclic electron flow around PSI, and state transitions. The polypeptide is Cytochrome f (Cucumis sativus (Cucumber)).